Consider the following 400-residue polypeptide: Formate-dependent phosphoribosylglycinamide formyltransferase (400 aa).

Residues 22 to 23 and Glu-82 each bind N(1)-(5-phospho-beta-D-ribosyl)glycinamide; that span reads EL. ATP-binding positions include Arg-115, Lys-156, 161-166, 196-199, and Glu-204; these read SSGKGQ and EGFI. The ATP-grasp domain occupies 120–309; that stretch reads RLAAETLGLP…EFALHARAIL (190 aa). Glu-268 and Glu-280 together coordinate Mg(2+). N(1)-(5-phospho-beta-D-ribosyl)glycinamide is bound by residues Asp-287, Lys-361, and 368-369; that span reads RR.

The protein belongs to the PurK/PurT family. As to quaternary structure, homodimer.

The catalysed reaction is N(1)-(5-phospho-beta-D-ribosyl)glycinamide + formate + ATP = N(2)-formyl-N(1)-(5-phospho-beta-D-ribosyl)glycinamide + ADP + phosphate + H(+). The protein operates within purine metabolism; IMP biosynthesis via de novo pathway; N(2)-formyl-N(1)-(5-phospho-D-ribosyl)glycinamide from N(1)-(5-phospho-D-ribosyl)glycinamide (formate route): step 1/1. Functionally, involved in the de novo purine biosynthesis. Catalyzes the transfer of formate to 5-phospho-ribosyl-glycinamide (GAR), producing 5-phospho-ribosyl-N-formylglycinamide (FGAR). Formate is provided by PurU via hydrolysis of 10-formyl-tetrahydrofolate. The sequence is that of Formate-dependent phosphoribosylglycinamide formyltransferase from Xanthomonas campestris pv. campestris (strain 8004).